The sequence spans 178 residues: Neuroblastoma suppressor of tumorigenicity 1 (178 aa).

Positions 1–16 are cleaved as a signal peptide; sequence MLWVLVGAVLPVMLLA. 5 cysteine pairs are disulfide-bonded: cysteine 34–cysteine 84, cysteine 48–cysteine 98, cysteine 58–cysteine 117, cysteine 62–cysteine 119, and cysteine 81–cysteine 122. The CTCK domain occupies 34 to 123; that stretch reads CEAKNITQIV…IVHCSCQACG (90 aa). The interval 132–178 is disordered; that stretch reads NVYVQGEDSPGSQPGPHSHAHPHPGGQTPEPEEPPGAPQVEEEGAED. Residues 140-160 are compositionally biased toward low complexity; sequence SPGSQPGPHSHAHPHPGGQTP.

This sequence belongs to the DAN family. In terms of assembly, homodimer.

The protein resides in the secreted. Possible candidate as a tumor suppressor gene of neuroblastoma. May play an important role in preventing cells from entering the final stage (G1/S) of the transformation process. This is Neuroblastoma suppressor of tumorigenicity 1 (Nbl1) from Mus musculus (Mouse).